The sequence spans 137 residues: Ribonuclease VapC18 (137 aa).

The PINc domain maps to 4–126 (CVDTSAWHHA…YDRVAAITGQ (123 aa)). Mg(2+)-binding residues include D6 and D96.

This sequence belongs to the PINc/VapC protein family. It depends on Mg(2+) as a cofactor.

Functionally, toxic component of a type II toxin-antitoxin (TA) system. An RNase. The cognate antitoxin is VapB18. The protein is Ribonuclease VapC18 of Mycobacterium tuberculosis (strain ATCC 25618 / H37Rv).